A 913-amino-acid polypeptide reads, in one-letter code: Glutamate receptor ionotropic, kainate 2 (913 aa).

Residues 1–566 (MCAGTMKIIS…VFSFLNPLSP (566 aa)) lie on the Extracellular side of the membrane. 7 N-linked (GlcNAc...) asparagine glycosylation sites follow: Asn72, Asn78, Asn280, Asn383, Asn417, Asn428, and Asn435. Cysteines 101 and 352 form a disulfide. The L-glutamate site is built by Pro521, Ala523, and Arg528. An N-linked (GlcNAc...) asparagine glycan is attached at Asn551. A helical transmembrane segment spans residues 567 to 587 (DIWMYILLAYLGVSCVLFVIA). The Cytoplasmic segment spans residues 588–643 (RFSPYEWYNPHPCNPDSDVVENNFTLLNSFWFGVGALMQQGSELMPKALSTRIVGG). A helical membrane pass occupies residues 644 to 664 (IWWFFTLIIISSYTANLAAFL). The Extracellular segment spans residues 665-824 (TVERMESPID…KEASALGVQN (160 aa)). L-glutamate contacts are provided by Ala694, Thr695, and Glu743. Cys755 and Cys809 are joined by a disulfide. A glycan (N-linked (GlcNAc...) asparagine) is linked at Asn756. Residues 825 to 845 (IGGIFIVLAAGLVLSVFVAVG) traverse the membrane as a helical segment. The Cytoplasmic portion of the chain corresponds to 846-913 (EFLYKSKKNA…RRLPGKETMA (68 aa)).

The protein belongs to the glutamate-gated ion channel (TC 1.A.10.1) family. GRIK2 subfamily. As to quaternary structure, homotetramer and heterotetramer with GRIK5. Tetramers may be formed by the dimerization of dimers.

The protein resides in the cell membrane. The protein localises to the postsynaptic cell membrane. The enzyme catalyses Ca(2+)(in) = Ca(2+)(out). It carries out the reaction Na(+)(in) = Na(+)(out). Cold receptor activity activated by temperatures between 10-19 degrees Celsius. Ionotropic glutamate receptor that functions as a cation-permeable ligand-gated ion channel, gated by L-glutamate and the glutamatergic agonist kainic acid. L-glutamate acts as an excitatory neurotransmitter at many synapses in the central nervous system. Binding of the excitatory neurotransmitter L-glutamate induces a conformation change, leading to the opening of the cation channel, and thereby converts the chemical signal to an electrical impulse. The receptor then desensitizes rapidly and enters a transient inactive state, characterized by the presence of bound agonist. Its function is as follows. Independent of its ionotropic glutamate receptor activity, acts as a thermoreceptor conferring sensitivity to cold temperatures. Functions in dorsal root ganglion neurons. In Xenopus laevis (African clawed frog), this protein is Glutamate receptor ionotropic, kainate 2 (grik2).